Consider the following 347-residue polypeptide: UPF0284 protein SSO2213 (347 aa).

This sequence belongs to the UPF0284 family.

In Saccharolobus solfataricus (strain ATCC 35092 / DSM 1617 / JCM 11322 / P2) (Sulfolobus solfataricus), this protein is UPF0284 protein SSO2213.